Here is a 361-residue protein sequence, read N- to C-terminus: Cytochrome c peroxidase, mitochondrial (361 aa).

A mitochondrion-targeting transit peptide spans 1-67 (MTTAVRLLPS…NWGKAAALAS (67 aa)). His-119 (proton acceptor) is an active-site residue. Residue Tyr-220 is modified to Phosphotyrosine. His-242 is a binding site for heme b. Residue Trp-258 is the Tryptophan radical intermediate of the active site.

This sequence belongs to the peroxidase family. Cytochrome c peroxidase subfamily. As to quaternary structure, forms a one-to-one complex with cytochrome c. It depends on heme b as a cofactor. Post-translationally, CCP1 precursor is processed by the rhomboid protease PCP1, which cleaves the N-terminal hydrophobic transit peptide. The m-AAA protease (composed of YTA12/RCA1 and YTA10/AFG3) is required for CCP1 maturation: m-AAA protease promotes membrane dislocation of the CCP1 transmembrane segment within the transit peptide to ensure the correct positioning of CCP1 within the membrane bilayer, allowing intramembrane cleavage by PCP1.

The protein resides in the mitochondrion matrix. The protein localises to the mitochondrion intermembrane space. The catalysed reaction is 2 Fe(II)-[cytochrome c] + H2O2 + 2 H(+) = 2 Fe(III)-[cytochrome c] + 2 H2O. In terms of biological role, destroys radicals which are normally produced within the cells and which are toxic to biological systems. This chain is Cytochrome c peroxidase, mitochondrial (CCP1), found in Saccharomyces cerevisiae (strain ATCC 204508 / S288c) (Baker's yeast).